The chain runs to 518 residues: Protein translocase subunit SecD (518 aa).

Helical transmembrane passes span 9–29, 356–376, 377–397, 406–426, 463–483, and 486–506; these read IVLSIICTVFAIICALPNFIQ, GKKAGLIGFVAVCIFMILSYG, VIGLFANIALILALLYILALL, LPGIAGIILTIGMAVDANVLI, LIVAFALYIFGVGAIKGFAVA, and IGIISSMFSAIIITKLLIDVW.

This sequence belongs to the SecD/SecF family. SecD subfamily. In terms of assembly, forms a complex with SecF. Part of the essential Sec protein translocation apparatus which comprises SecA, SecYEG and auxiliary proteins SecDF-YajC and YidC.

The protein localises to the cell inner membrane. Its function is as follows. Part of the Sec protein translocase complex. Interacts with the SecYEG preprotein conducting channel. SecDF uses the proton motive force (PMF) to complete protein translocation after the ATP-dependent function of SecA. In Rickettsia prowazekii (strain Madrid E), this protein is Protein translocase subunit SecD.